A 306-amino-acid chain; its full sequence is MSSTAPLDSKATEQITTAAESKHNETQATRRKRYREAQEQTRNKHLRFQASPTPEEASPELPSDEVAKLPQKRFYRQRAHSNPFSDHNLEYPVLPSQMDWSTIYPHYTPASLRKVEIADIGCGFGGLLIDLGPQFPESLILGMEIRVQVTNYVQDRLIALREIHKADAYNYDNLGVIRGNAMKFLPNFFTKGQLSKMFFCFPDPHFKQRKHKARIITNTLLSEYAYVLREGGVVYTITDVEDLHNWMVKHLDEHPLFERLSKEWEEQDPCVKIMYNSTEEGQKVARNQGSKYVACYKRLPNPDDCE.

A compositionally biased stretch (polar residues) spans 1–19 (MSSTAPLDSKATEQITTAA). The disordered stretch occupies residues 1-65 (MSSTAPLDSK…EASPELPSDE (65 aa)). S-adenosyl-L-methionine contacts are provided by residues G121, 144–145 (EI), 180–181 (NA), and C200. Residue D203 is part of the active site. 278-280 (TEE) provides a ligand contact to S-adenosyl-L-methionine.

This sequence belongs to the class I-like SAM-binding methyltransferase superfamily. TrmB family. Forms a complex with TRM82.

It is found in the nucleus. The catalysed reaction is guanosine(46) in tRNA + S-adenosyl-L-methionine = N(7)-methylguanosine(46) in tRNA + S-adenosyl-L-homocysteine. Its pathway is tRNA modification; N(7)-methylguanine-tRNA biosynthesis. Functionally, catalyzes the formation of N(7)-methylguanine at position 46 (m7G46) in tRNA. The chain is tRNA (guanine-N(7)-)-methyltransferase from Lodderomyces elongisporus (strain ATCC 11503 / CBS 2605 / JCM 1781 / NBRC 1676 / NRRL YB-4239) (Yeast).